The chain runs to 118 residues: Large ribosomal subunit protein bL20 (118 aa).

It belongs to the bacterial ribosomal protein bL20 family.

In terms of biological role, binds directly to 23S ribosomal RNA and is necessary for the in vitro assembly process of the 50S ribosomal subunit. It is not involved in the protein synthesizing functions of that subunit. The sequence is that of Large ribosomal subunit protein bL20 from Rhodopirellula baltica (strain DSM 10527 / NCIMB 13988 / SH1).